Here is a 204-residue protein sequence, read N- to C-terminus: Putative AgrB-like protein (204 aa).

Helical transmembrane passes span 52–74, 87–107, 111–131, 151–168, and 173–190; these read YGIA…YLWL, LNCT…FQNI, NWIV…FAPA, AMIG…IPFA, and LIMV…PLTY.

It belongs to the AgrB family.

It is found in the cell membrane. Its function is as follows. May be involved in the proteolytic processing of a quorum sensing system signal molecule precursor. This Listeria monocytogenes serovar 1/2a (strain ATCC BAA-679 / EGD-e) protein is Putative AgrB-like protein.